A 304-amino-acid chain; its full sequence is GTP cyclohydrolase FolE2 (304 aa).

The protein belongs to the GTP cyclohydrolase IV family.

It catalyses the reaction GTP + H2O = 7,8-dihydroneopterin 3'-triphosphate + formate + H(+). The protein operates within cofactor biosynthesis; 7,8-dihydroneopterin triphosphate biosynthesis; 7,8-dihydroneopterin triphosphate from GTP: step 1/1. Functionally, converts GTP to 7,8-dihydroneopterin triphosphate. This is GTP cyclohydrolase FolE2 from Bdellovibrio bacteriovorus (strain ATCC 15356 / DSM 50701 / NCIMB 9529 / HD100).